The chain runs to 261 residues: Enolase-phosphatase E1 (261 aa).

Mg(2+)-binding residues include Asp16 and Glu18. Residues 153–154 (SS) and Lys187 each bind substrate. Mg(2+) is bound at residue Asp212.

This sequence belongs to the HAD-like hydrolase superfamily. MasA/MtnC family. In terms of assembly, monomer. It depends on Mg(2+) as a cofactor.

Its subcellular location is the cytoplasm. It localises to the nucleus. The catalysed reaction is 5-methylsulfanyl-2,3-dioxopentyl phosphate + H2O = 1,2-dihydroxy-5-(methylsulfanyl)pent-1-en-3-one + phosphate. It participates in amino-acid biosynthesis; L-methionine biosynthesis via salvage pathway; L-methionine from S-methyl-5-thio-alpha-D-ribose 1-phosphate: step 3/6. The protein operates within amino-acid biosynthesis; L-methionine biosynthesis via salvage pathway; L-methionine from S-methyl-5-thio-alpha-D-ribose 1-phosphate: step 4/6. Bifunctional enzyme that catalyzes the enolization of 2,3-diketo-5-methylthiopentyl-1-phosphate (DK-MTP-1-P) into the intermediate 2-hydroxy-3-keto-5-methylthiopentenyl-1-phosphate (HK-MTPenyl-1-P), which is then dephosphorylated to form the acireductone 1,2-dihydroxy-3-keto-5-methylthiopentene (DHK-MTPene). This Danio rerio (Zebrafish) protein is Enolase-phosphatase E1 (enoph1).